Reading from the N-terminus, the 325-residue chain is Putative 1-aminocyclopropane-1-carboxylate deaminase (325 aa).

Residue Lys-54 is modified to N6-(pyridoxal phosphate)lysine.

Belongs to the ACC deaminase/D-cysteine desulfhydrase family. It depends on pyridoxal 5'-phosphate as a cofactor.

It carries out the reaction 1-aminocyclopropane-1-carboxylate + H2O = 2-oxobutanoate + NH4(+). The protein is Putative 1-aminocyclopropane-1-carboxylate deaminase of Pyrococcus horikoshii (strain ATCC 700860 / DSM 12428 / JCM 9974 / NBRC 100139 / OT-3).